The following is a 258-amino-acid chain: Ribosomal RNA small subunit methyltransferase J (258 aa).

S-adenosyl-L-methionine is bound by residues Glu-123–Arg-124 and Asp-177. Residues Ile-232–Ala-258 are disordered. Residues His-239–Pro-252 show a composition bias toward basic and acidic residues.

It belongs to the methyltransferase superfamily. RsmJ family.

It is found in the cytoplasm. The catalysed reaction is guanosine(1516) in 16S rRNA + S-adenosyl-L-methionine = N(2)-methylguanosine(1516) in 16S rRNA + S-adenosyl-L-homocysteine + H(+). Its function is as follows. Specifically methylates the guanosine in position 1516 of 16S rRNA. The polypeptide is Ribosomal RNA small subunit methyltransferase J (Pseudomonas putida (strain ATCC 47054 / DSM 6125 / CFBP 8728 / NCIMB 11950 / KT2440)).